A 141-amino-acid chain; its full sequence is Protein X (141 aa).

Residues 22–52 form a disordered region; that stretch reads GPQSSGPPFPRPAAGSAASSASSPSPSDESD. Over residues 33-48 the composition is skewed to low complexity; that stretch reads PAAGSAASSASSPSPS. A mitochondrial targeting sequence region spans residues 68-113; the sequence is PCCLVFTCADLRTMDSTVNFVSWHAKRQLGMPSKDLWTPYIKDQLL.

This sequence belongs to the orthohepadnavirus protein X family. As to quaternary structure, may form homodimer. May interact with host CEBPA, CFLAR, CREB1, DDB1, E4F1, HBXIP, HSPD1/HSP60, NFKBIA, POLR2E and SMAD4. Interacts with host SMC5-SMC6 complex and induces its degradation. Interacts with host TRPC4AP; leading to prevent ubiquitination of TRPC4AP. Interacts with host PLSCR1; this interaction promotes ubiquitination and degradation of HBx and impairs HBx-mediated cell proliferation. In terms of processing, a fraction may be phosphorylated in insect cells and HepG2 cells, a human hepatoblastoma cell line. Phosphorylated in vitro by host protein kinase C or mitogen-activated protein kinase. N-acetylated in insect cells.

The protein resides in the host cytoplasm. It localises to the host nucleus. Its subcellular location is the host mitochondrion. Its function is as follows. Multifunctional protein that plays a role in silencing host antiviral defenses and promoting viral transcription. Does not seem to be essential for HBV infection. May be directly involved in development of cirrhosis and liver cancer (hepatocellular carcinoma). Most of cytosolic activities involve modulation of cytosolic calcium. The effect on apoptosis is controversial depending on the cell types in which the studies have been conducted. May induce apoptosis by localizing in mitochondria and causing loss of mitochondrial membrane potential. May also modulate apoptosis by binding host CFLAR, a key regulator of the death-inducing signaling complex (DISC). Promotes viral transcription by using the host E3 ubiquitin ligase DDB1 to target the SMC5-SMC6 complex to proteasomal degradation. This host complex would otherwise bind to viral episomal DNA, and prevents its transcription. Moderately stimulates transcription of many different viral and cellular transcription elements. Promoters and enhancers stimulated by HBx contain DNA binding sites for NF-kappa-B, AP-1, AP-2, c-EBP, ATF/CREB, or the calcium-activated factor NF-AT. The sequence is that of Protein X from Woodchuck hepatitis B virus (isolate w64/pWS23) (WHV).